The sequence spans 255 residues: 5-oxoprolinase subunit A (255 aa).

The protein belongs to the LamB/PxpA family. As to quaternary structure, forms a complex composed of PxpA, PxpB and PxpC.

The enzyme catalyses 5-oxo-L-proline + ATP + 2 H2O = L-glutamate + ADP + phosphate + H(+). Its function is as follows. Catalyzes the cleavage of 5-oxoproline to form L-glutamate coupled to the hydrolysis of ATP to ADP and inorganic phosphate. The polypeptide is 5-oxoprolinase subunit A (Pyrococcus furiosus (strain ATCC 43587 / DSM 3638 / JCM 8422 / Vc1)).